The following is a 357-amino-acid chain: Uroporphyrinogen decarboxylase (357 aa).

Residues 27–31 (RQAGR), Asp77, Tyr154, Ser209, and His330 contribute to the substrate site.

It belongs to the uroporphyrinogen decarboxylase family. As to quaternary structure, homodimer.

The protein resides in the cytoplasm. It carries out the reaction uroporphyrinogen III + 4 H(+) = coproporphyrinogen III + 4 CO2. It functions in the pathway porphyrin-containing compound metabolism; protoporphyrin-IX biosynthesis; coproporphyrinogen-III from 5-aminolevulinate: step 4/4. Catalyzes the decarboxylation of four acetate groups of uroporphyrinogen-III to yield coproporphyrinogen-III. This Acinetobacter baumannii (strain ACICU) protein is Uroporphyrinogen decarboxylase.